The primary structure comprises 499 residues: Pyruvate kinase 1 (499 aa).

Arg50 contacts substrate. K(+) is bound by residues Asn52, Ser54, Asp84, and Thr85. 52-55 provides a ligand contact to ATP; that stretch reads NFSH. Residue Arg91 participates in ATP binding. Glu241 provides a ligand contact to Mg(2+). Substrate contacts are provided by Gly264, Asp265, and Thr297. Position 265 (Asp265) interacts with Mg(2+).

Belongs to the pyruvate kinase family. Homotetramer. It depends on Mg(2+) as a cofactor. K(+) is required as a cofactor.

It carries out the reaction pyruvate + ATP = phosphoenolpyruvate + ADP + H(+). Its pathway is carbohydrate degradation; glycolysis; pyruvate from D-glyceraldehyde 3-phosphate: step 5/5. Activated by fructose 2,6-bisphosphate, activated by the effector in a cooperative manner. This is Pyruvate kinase 1 (PYK1) from Trypanosoma brucei brucei.